A 462-amino-acid chain; its full sequence is Cytochrome P450 20A1 (462 aa).

A helical membrane pass occupies residues 4-24 (FAIFAVTFLLALVGAVLYLYP). Cys-409 is a binding site for heme.

The protein belongs to the cytochrome P450 family. It depends on heme as a cofactor.

Its subcellular location is the membrane. This chain is Cytochrome P450 20A1 (CYP20A1), found in Bos taurus (Bovine).